The chain runs to 353 residues: Phosphoribosylformylglycinamidine cyclo-ligase (353 aa).

Belongs to the AIR synthase family.

The protein localises to the cytoplasm. The catalysed reaction is 2-formamido-N(1)-(5-O-phospho-beta-D-ribosyl)acetamidine + ATP = 5-amino-1-(5-phospho-beta-D-ribosyl)imidazole + ADP + phosphate + H(+). It participates in purine metabolism; IMP biosynthesis via de novo pathway; 5-amino-1-(5-phospho-D-ribosyl)imidazole from N(2)-formyl-N(1)-(5-phospho-D-ribosyl)glycinamide: step 2/2. This chain is Phosphoribosylformylglycinamidine cyclo-ligase, found in Pseudomonas aeruginosa (strain LESB58).